The primary structure comprises 115 residues: NADH-ubiquinone oxidoreductase chain 3 (115 aa).

A run of 3 helical transmembrane segments spans residues 3–23 (LMLALTVNTLLTALLTIIMFW), 55–75 (FFLVAITFLLFDLEIALLLSL), and 84–104 (LPTMIKTSIMFITILALSLAY).

Belongs to the complex I subunit 3 family. As to quaternary structure, core subunit of respiratory chain NADH dehydrogenase (Complex I) which is composed of 45 different subunits. Interacts with TMEM186. Interacts with TMEM242.

The protein localises to the mitochondrion inner membrane. The catalysed reaction is a ubiquinone + NADH + 5 H(+)(in) = a ubiquinol + NAD(+) + 4 H(+)(out). Core subunit of the mitochondrial membrane respiratory chain NADH dehydrogenase (Complex I) which catalyzes electron transfer from NADH through the respiratory chain, using ubiquinone as an electron acceptor. Essential for the catalytic activity of complex I. This chain is NADH-ubiquinone oxidoreductase chain 3, found in Papio hamadryas (Hamadryas baboon).